Reading from the N-terminus, the 96-residue chain is MRKYEIMYIIRPGVEEEAQKALVERFAGVLTNNGAEIINTKEWGKRRLAYEINDLREGFYMILNVNANAEAINEFDRLAKINEDILRHIVVKEEEK.

Belongs to the bacterial ribosomal protein bS6 family.

Its function is as follows. Binds together with bS18 to 16S ribosomal RNA. The polypeptide is Small ribosomal subunit protein bS6 (Bacillus thuringiensis subsp. konkukian (strain 97-27)).